Here is a 320-residue protein sequence, read N- to C-terminus: Iminosuccinate reductase (320 aa).

K67 functions as the Proton donor/acceptor in the catalytic mechanism. NAD(+)-binding positions include R110, 137-138 (HQ), N159, S199, 219-222 (MGTD), K226, and G291.

It belongs to the ornithine cyclodeaminase/mu-crystallin family. BhcD subfamily.

The enzyme catalyses L-aspartate + NAD(+) = iminosuccinate + NADH + H(+). Functionally, imine reductase that catalyzes the NADH-dependent reduction of iminosuccinate to L-aspartate. Is essential for the growth of P.denitrificans in the presence of glycolate and glyoxylate since it functions in glyoxylate assimilation via the beta-hydroxyaspartate cycle (BHAC). Thereby BhcD regenerates the amino group donor for the first step of the BHAC. The protein is Iminosuccinate reductase of Paracoccus denitrificans (strain Pd 1222).